Consider the following 510-residue polypeptide: NAD(P)H-quinone oxidoreductase subunit 2 B, chloroplastic (510 aa).

13 helical membrane passes run 24-44 (LLLFDGSFIFPECILIFGLIL), 57-77 (IPWLYFISSTSLVMSITALLF), 99-119 (IFQFLILLCSTLCIPLSVEYI), 124-144 (MAIAEFLLFVLTATLGGMFLC), 149-169 (LITIFVAPECFSLCSYLLSGY), 183-203 (YLLMGGASSSILVHGFSWLYG), 227-247 (PGISIALIFITVGIGFKLSPA), 295-315 (WHLLLEILAILSMILGNLIAI), 323-343 (MLAYSSIGQIGYVIIGIIVGD), 354-374 (YMLFYISMNLGTFACIVLFGL), 395-415 (ALSLALCLLSLGGLPPLAGFF), 418-438 (LHLFWCGWQAGLYFLVSIGLL), and 484-504 (MIVCVIASTIPGISMNPIIAI).

It belongs to the complex I subunit 2 family. As to quaternary structure, NDH is composed of at least 16 different subunits, 5 of which are encoded in the nucleus.

The protein localises to the plastid. It is found in the chloroplast thylakoid membrane. It catalyses the reaction a plastoquinone + NADH + (n+1) H(+)(in) = a plastoquinol + NAD(+) + n H(+)(out). It carries out the reaction a plastoquinone + NADPH + (n+1) H(+)(in) = a plastoquinol + NADP(+) + n H(+)(out). In terms of biological role, NDH shuttles electrons from NAD(P)H:plastoquinone, via FMN and iron-sulfur (Fe-S) centers, to quinones in the photosynthetic chain and possibly in a chloroplast respiratory chain. The immediate electron acceptor for the enzyme in this species is believed to be plastoquinone. Couples the redox reaction to proton translocation, and thus conserves the redox energy in a proton gradient. The protein is NAD(P)H-quinone oxidoreductase subunit 2 B, chloroplastic of Gossypium hirsutum (Upland cotton).